The sequence spans 589 residues: Guanylate-binding protein 2 (589 aa).

The GTPase domain (Globular) stretch occupies residues 1-309; it reads MASEIHMSEP…GAISNGSLPC (309 aa). Residues 35–276 enclose the GB1/RHD3-type G domain; it reads TQPVVVVAIV…FTSYILSYSS (242 aa). Residues 45–52, 181–182, and Leu-245 each bind GTP; these read GLYRTGKS and RD. Cys-586 is subject to Cysteine methyl ester. Cys-586 carries S-geranylgeranyl cysteine lipidation. The propeptide at 587 to 589 is removed in mature form; that stretch reads TIL.

Belongs to the TRAFAC class dynamin-like GTPase superfamily. GB1/RHD3 GTPase family. GB1 subfamily. As to quaternary structure, homodimer; homodimerization occurs upon GTP-binding and is required for the association with membranous structures. Heterodimer with other family members, including GBP1, GBP3, GBP4 and GBP5. Post-translationally, isoprenylation is required for proper subcellular location.

The protein localises to the cytoplasmic vesicle membrane. It is found in the golgi apparatus membrane. It localises to the cytoplasm. The protein resides in the perinuclear region. The enzyme catalyses GTP + H2O = GDP + phosphate + H(+). In terms of biological role, interferon (IFN)-inducible GTPase that plays important roles in innate immunity against a diverse range of bacterial, viral and protozoan pathogens. Hydrolyzes GTP to GMP in 2 consecutive cleavage reactions, but the major reaction product is GDP. Following infection, recruited to the pathogen-containing vacuoles or vacuole-escaped bacteria and acts as a positive regulator of inflammasome assembly by promoting the release of inflammasome ligands from bacteria. Acts by promoting lysis of pathogen-containing vacuoles, releasing pathogens into the cytosol. Following pathogen release in the cytosol, promotes recruitment of proteins that mediate bacterial cytolysis, such as Gm12250/Irgb10: this liberates ligands that are detected by inflammasomes, such as lipopolysaccharide (LPS) that activates the non-canonical CASP4/CASP11 inflammasome or double-stranded DNA (dsDNA) that activates the AIM2 inflammasome. Confers protection to the protozoan pathogen Toxoplasma gondii. Independently of its GTPase activity, acts as an inhibitor of various viruses infectivity by inhibiting FURIN-mediated maturation of viral envelope proteins. This Mus musculus (Mouse) protein is Guanylate-binding protein 2.